The following is a 341-amino-acid chain: Ferredoxin--NADP reductase 2 (341 aa).

7 residues coordinate FAD: Asp42, Gln50, Tyr55, Ile95, Phe129, Asp294, and Ser335.

The protein belongs to the ferredoxin--NADP reductase type 2 family. Homodimer. FAD serves as cofactor.

The enzyme catalyses 2 reduced [2Fe-2S]-[ferredoxin] + NADP(+) + H(+) = 2 oxidized [2Fe-2S]-[ferredoxin] + NADPH. This chain is Ferredoxin--NADP reductase 2, found in Chloroherpeton thalassium (strain ATCC 35110 / GB-78).